The sequence spans 355 residues: Elongation factor Ts (355 aa).

The interval 82 to 85 is involved in Mg(2+) ion dislocation from EF-Tu; sequence TDFV.

It belongs to the EF-Ts family.

It localises to the cytoplasm. Its function is as follows. Associates with the EF-Tu.GDP complex and induces the exchange of GDP to GTP. It remains bound to the aminoacyl-tRNA.EF-Tu.GTP complex up to the GTP hydrolysis stage on the ribosome. The sequence is that of Elongation factor Ts from Helicobacter hepaticus (strain ATCC 51449 / 3B1).